Reading from the N-terminus, the 177-residue chain is Bifunctional protein PyrR (177 aa).

The PRPP-binding motif lies at 99 to 111 (VVLVDDVLYTGRT).

It belongs to the purine/pyrimidine phosphoribosyltransferase family. PyrR subfamily. As to quaternary structure, homodimer and homohexamer; in equilibrium.

The catalysed reaction is UMP + diphosphate = 5-phospho-alpha-D-ribose 1-diphosphate + uracil. Functionally, regulates transcriptional attenuation of the pyrimidine nucleotide (pyr) operon by binding in a uridine-dependent manner to specific sites on pyr mRNA. This disrupts an antiterminator hairpin in the RNA and favors formation of a downstream transcription terminator, leading to a reduced expression of downstream genes. In terms of biological role, also displays a weak uracil phosphoribosyltransferase activity which is not physiologically significant. The sequence is that of Bifunctional protein PyrR from Clostridioides difficile (strain 630) (Peptoclostridium difficile).